The following is a 351-amino-acid chain: Cyclic AMP-dependent transcription factor ATF-4 (351 aa).

Lys-53 participates in a covalent cross-link: Glycyl lysine isopeptide (Lys-Gly) (interchain with G-Cter in SUMO2). Positions 210 to 268 are disordered; that stretch reads EEDTPSDNDSGICMSPESYLGSPQHSPSTRGSPNRSLPSPGVLCGSARPKPYDPPGEKM. Thr-213 is subject to Phosphothreonine. A Phosphoserine; by CK2 modification is found at Ser-215. The BetaTrCP degron motif motif lies at 215 to 224; that stretch reads SDNDSGICMS. Phosphoserine is present on residues Ser-219, Ser-224, Ser-231, and Ser-235. Positions 230–246 are enriched in polar residues; it reads GSPQHSPSTRGSPNRSL. Residue Pro-236 is modified to 4-hydroxyproline. Ser-245 is subject to Phosphoserine; by RPS6KA3. Ser-248 is subject to Phosphoserine. Residues Lys-259, Lys-267, and Lys-272 each participate in a glycyl lysine isopeptide (Lys-Gly) (interchain with G-Cter in SUMO2) cross-link. In terms of domain architecture, bZIP spans 278–341; sequence LDKKLKKMEQ…QYLKDLIEEV (64 aa). Residues 280-300 form a basic motif region; it reads KKLKKMEQNKTAATRYRQKKR. Residues 280–340 adopt a coiled-coil conformation; it reads KKLKKMEQNK…IQYLKDLIEE (61 aa). The interval 305–341 is interaction with GABBR1; sequence ALTGECKELEKKNEALKERADSLAKEIQYLKDLIEEV. Residues 306 to 334 form a leucine-zipper region; that stretch reads LTGECKELEKKNEALKERADSLAKEIQYL. Lys-311 carries the N6-acetyllysine modification.

The protein belongs to the bZIP family. Binds DNA as a homodimer and as a heterodimer. Heterodimer; heterodimerizes with CEBPB. Heterodimer; heterodimerizes with DDIT3/CHOP. Interacts with CEP290 (via an N-terminal region). Interacts with NEK6, DAPK2 (isoform 2) and ZIPK/DAPK3. Interacts (via its leucine zipper domain) with GABBR1 and GABBR2 (via their C-termini). Forms a heterodimer with TXLNG in osteoblasts. Interacts (via its DNA binding domain) with FOXO1 (C-terminal half); the interaction occurs in osteoblasts and regulates glucose homeostasis through suppression of beta-cell proliferation and a decrease in insulin production. Interacts with SATB2; the interaction results in enhanced DNA binding and transactivation by these transcription factors. Interacts with ABRAXAS2. Interacts with TRIB3, inhibiting the transactivation activity of ATF4. Interacts with DISC1; which inhibits ATF4 transcription factor activity by disrupting ATF4 dimerization and DNA-binding. Interacts with EP300/p300; EP300/p300 stabilizes ATF4 and increases its transcriptional activity independently of its catalytic activity by preventing its ubiquitination. Ubiquitinated by SCF(BTRC) in response to mTORC1 signal, followed by proteasomal degradation and leading to down-regulate expression of SIRT4. Interaction with EP300/p300 inhibits ubiquitination by SCF(BTRC). Post-translationally, phosphorylation at Ser-245 by RPS6KA3/RSK2 in osteoblasts enhances transactivation activity and promotes osteoblast differentiation. Phosphorylated on the betaTrCP degron motif at Ser-219, followed by phosphorylation at Thr-213, Ser-224, Ser-231, Ser-235 and Ser-248, promoting interaction with BTRC and ubiquitination. Phosphorylation is promoted by mTORC1. Phosphorylation at Ser-215 by CK2 decreases its stability. Phosphorylated by NEK6. In terms of processing, hydroxylated by PHD3, leading to decreased protein stability.

The protein localises to the nucleus. Its subcellular location is the nucleus speckle. It localises to the cytoplasm. It is found in the cell membrane. The protein resides in the cytoskeleton. The protein localises to the microtubule organizing center. Its subcellular location is the centrosome. In terms of biological role, transcription factor that binds the cAMP response element (CRE) (consensus: 5'-GTGACGT[AC][AG]-3') and displays two biological functions, as regulator of metabolic and redox processes under normal cellular conditions, and as master transcription factor during integrated stress response (ISR). Binds to asymmetric CRE's as a heterodimer and to palindromic CRE's as a homodimer. Core effector of the ISR, which is required for adaptation to various stress such as endoplasmic reticulum (ER) stress, amino acid starvation, mitochondrial stress or oxidative stress. During ISR, ATF4 translation is induced via an alternative ribosome translation re-initiation mechanism in response to EIF2S1/eIF-2-alpha phosphorylation, and stress-induced ATF4 acts as a master transcription factor of stress-responsive genes in order to promote cell recovery. Promotes the transcription of genes linked to amino acid sufficiency and resistance to oxidative stress to protect cells against metabolic consequences of ER oxidation. Activates the transcription of NLRP1, possibly in concert with other factors in response to ER stress. Activates the transcription of asparagine synthetase (ASNS) in response to amino acid deprivation or ER stress. However, when associated with DDIT3/CHOP, the transcriptional activation of the ASNS gene is inhibited in response to amino acid deprivation. Together with DDIT3/CHOP, mediates programmed cell death by promoting the expression of genes involved in cellular amino acid metabolic processes, mRNA translation and the terminal unfolded protein response (terminal UPR), a cellular response that elicits programmed cell death when ER stress is prolonged and unresolved. Activates the expression of COX7A2L/SCAF1 downstream of the EIF2AK3/PERK-mediated unfolded protein response, thereby promoting formation of respiratory chain supercomplexes and increasing mitochondrial oxidative phosphorylation. Together with DDIT3/CHOP, activates the transcription of the IRS-regulator TRIB3 and promotes ER stress-induced neuronal cell death by regulating the expression of BBC3/PUMA in response to ER stress. May cooperate with the UPR transcriptional regulator QRICH1 to regulate ER protein homeostasis which is critical for cell viability in response to ER stress. In the absence of stress, ATF4 translation is at low levels and it is required for normal metabolic processes such as embryonic lens formation, fetal liver hematopoiesis, bone development and synaptic plasticity. Acts as a regulator of osteoblast differentiation in response to phosphorylation by RPS6KA3/RSK2: phosphorylation in osteoblasts enhances transactivation activity and promotes expression of osteoblast-specific genes and post-transcriptionally regulates the synthesis of Type I collagen, the main constituent of the bone matrix. Cooperates with FOXO1 in osteoblasts to regulate glucose homeostasis through suppression of beta-cell production and decrease in insulin production. Activates transcription of SIRT4. Regulates the circadian expression of the core clock component PER2 and the serotonin transporter SLC6A4. Binds in a circadian time-dependent manner to the cAMP response elements (CRE) in the SLC6A4 and PER2 promoters and periodically activates the transcription of these genes. Mainly acts as a transcriptional activator in cellular stress adaptation, but it can also act as a transcriptional repressor: acts as a regulator of synaptic plasticity by repressing transcription, thereby inhibiting induction and maintenance of long-term memory. Regulates synaptic functions via interaction with DISC1 in neurons, which inhibits ATF4 transcription factor activity by disrupting ATF4 dimerization and DNA-binding. Its function is as follows. (Microbial infection) Binds to a Tax-responsive enhancer element in the long terminal repeat of HTLV-I. The polypeptide is Cyclic AMP-dependent transcription factor ATF-4 (Homo sapiens (Human)).